Consider the following 344-residue polypeptide: Meiotic recombination protein DMC1 homolog A (344 aa).

Gly-133 to Thr-140 serves as a coordination point for ATP. DsDNA is bound at residue Arg-235. SsDNA is bound by residues Arg-235, Phe-238, Arg-241, Arg-247, and Arg-315. Residues Arg-241 and Arg-247 each coordinate dsDNA.

This sequence belongs to the RecA family. DMC1 subfamily. In terms of tissue distribution, expressed in meiotic young panicles.

It is found in the nucleus. Its function is as follows. Recombinase that may participate in meiotic recombination, specifically in homologous strand assimilation, which is required for the resolution of meiotic double-strand breaks. Exhibits DNA-dependent ATPase activity when bound to single-stranded DNA (ssDNA). Mediates renaturation of homologous complementary strands as well as assimilation of single strands into homologous supercoiled duplexes leading to D-loop formation. Binds circular single-stranded DNA (ssDNA) and circular double-stranded DNA (dsDNA) in vitro. Catalyzes DNA homologous renaturation and DNA strand exchange. The rates of these activities are dependent on the state of ATP hydrolysis. Forms helical filaments along ssDNA and dsDNA, and promotes strand exchange between ssDNA and dsDNA with long DNA substrates of several thousand base pairs. The presence of the replication protein A is not required for this activity. Seems to be required for homologous pairing and subsequent chromosome segregation during male meiosis. May be not directly required for homologous pairing during male meiosis. Required for synaptonemal complex assembly and crossover formation. Functions redundantly with DMC1B. The protein is Meiotic recombination protein DMC1 homolog A of Oryza sativa subsp. japonica (Rice).